The chain runs to 197 residues: Neurturin (197 aa).

The first 19 residues, 1–19 (MQRWKAAALASVLCSSVLS), serve as a signal peptide directing secretion. The propeptide occupies 20 to 95 (IWMCREGLLL…RAGPRRRRAR (76 aa)). The disordered stretch occupies residues 74 to 93 (TPWAGRPPGPRRRAGPRRRR). The span at 82–93 (GPRRRAGPRRRR) shows a compositional bias: basic residues. 3 cysteine pairs are disulfide-bonded: cysteine 103–cysteine 165, cysteine 130–cysteine 194, and cysteine 134–cysteine 196. Heparan sulfate group is bound by residues arginine 149, arginine 158, arginine 160, and glutamine 162.

Belongs to the TGF-beta family. GDNF subfamily. Homodimer; disulfide-linked. Interacts with GFRA2 coreceptor and RET: forms a 2:2:2 ternary complex composed of NRTN ligand, GFRA2 and RET receptor. Also forms a 4:4:4 tetrameric complex composed of 4 copies of NRTN ligand, GFRA2 and RET receptor, which prevents endocytosis of RET.

It is found in the secreted. In terms of biological role, growth factor that supports the survival of sympathetic neurons in culture. May regulate the development and maintenance of the CNS. Involved in the development of the neural crest. Might control the size of non-neuronal cell population such as haemopoietic cells. Acts by binding to its coreceptor, GFRA2, leading to autophosphorylation and activation of the RET receptor. Heparan sulfate-binding is required for signaling. The protein is Neurturin of Homo sapiens (Human).